The following is a 235-amino-acid chain: Chromosome partition protein MukE (235 aa).

The tract at residues 204-235 (QQEPSQSSLLDGFDADDTGHHDSELTMQEGEV) is disordered.

This sequence belongs to the MukE family. Interacts, and probably forms a ternary complex, with MukF and MukB. The complex formation is stimulated by calcium or magnesium.

Its subcellular location is the cytoplasm. The protein localises to the nucleoid. Its function is as follows. Involved in chromosome condensation, segregation and cell cycle progression. May participate in facilitating chromosome segregation by condensation DNA from both sides of a centrally located replisome during cell division. Probably acts via its interaction with MukB and MukF. In Photobacterium profundum (strain SS9), this protein is Chromosome partition protein MukE.